The sequence spans 511 residues: Maturase K (511 aa).

This sequence belongs to the intron maturase 2 family. MatK subfamily.

The protein resides in the plastid. It localises to the chloroplast. Its function is as follows. Usually encoded in the trnK tRNA gene intron. Probably assists in splicing its own and other chloroplast group II introns. The chain is Maturase K from Bromelia plumieri (Karatas).